The following is a 203-amino-acid chain: Nascent polypeptide-associated complex subunit alpha (203 aa).

Residues Met-1–Val-19 show a composition bias toward basic and acidic residues. Residues Met-1 to His-45 are disordered. Acidic residues predominate over residues Asp-21–Glu-32. The NAC-A/B domain occupies Ser-46–Ala-111. The tract at residues Gln-118–Lys-167 is disordered. Residues Ala-125–Glu-150 are compositionally biased toward basic and acidic residues. Acidic residues predominate over residues Glu-151–Gly-163. The UBA domain maps to Leu-164–Ile-203.

It belongs to the NAC-alpha family. Part of the nascent polypeptide-associated complex (NAC), consisting of egd2 and egd1. NAC associates with ribosomes via egd1.

It is found in the cytoplasm. It localises to the nucleus. In terms of biological role, component of the nascent polypeptide-associated complex (NAC), a dynamic component of the ribosomal exit tunnel, protecting the emerging polypeptides from interaction with other cytoplasmic proteins to ensure appropriate nascent protein targeting. The NAC complex also promotes mitochondrial protein import by enhancing productive ribosome interactions with the outer mitochondrial membrane and blocks the inappropriate interaction of ribosomes translating non-secretory nascent polypeptides with translocation sites in the membrane of the endoplasmic reticulum. Egd2 may also be involved in transcription regulation. The protein is Nascent polypeptide-associated complex subunit alpha (egd2) of Emericella nidulans (strain FGSC A4 / ATCC 38163 / CBS 112.46 / NRRL 194 / M139) (Aspergillus nidulans).